Reading from the N-terminus, the 95-residue chain is Probable FAD-linked sulfhydryl oxidase OPG072 (95 aa).

Residues M1 to R8 lie on the Intravirion side of the membrane. Residues M1–L95 form the ERV/ALR sulfhydryl oxidase domain. A helical transmembrane segment spans residues A9 to G25. Residues N26 to L95 are Virion surface-facing. A disulfide bond links C43 and C46.

Belongs to the orthopoxvirus OPG072 family. In terms of assembly, interacts with OPG128/A2.5; this interaction involves formation of a transient disulfide-bonded intermediate, allowing disulfide bond transfer. The cofactor is FAD.

Its subcellular location is the virion membrane. It localises to the host cytoplasm. The catalysed reaction is 2 R'C(R)SH + O2 = R'C(R)S-S(R)CR' + H2O2. Its function is as follows. FAD-dependent sulfhydryl oxidase that catalyzes disulfide bond formation. The complete pathway for formation of disulfide bonds in intracellular virion membrane proteins sequentially involves thiol-disulfide transfer between OPG072/E10, OPG128/A2.5 and OPG088/G4. The chain is Probable FAD-linked sulfhydryl oxidase OPG072 (OPG072) from Bos taurus (Bovine).